We begin with the raw amino-acid sequence, 156 residues long: Peptidyl-prolyl cis-trans isomerase H (156 aa).

Positions 1 to 155 (TPAGRLKCEL…MAVRITQCGE (155 aa)) constitute a PPIase cyclophilin-type domain.

Belongs to the cyclophilin-type PPIase family. PPIase H subfamily.

The protein resides in the nucleus. It carries out the reaction [protein]-peptidylproline (omega=180) = [protein]-peptidylproline (omega=0). In terms of biological role, PPIases accelerate the folding of proteins. It catalyzes the cis-trans isomerization of proline imidic peptide bonds in oligopeptides. In Mycosarcoma maydis (Corn smut fungus), this protein is Peptidyl-prolyl cis-trans isomerase H (CYP3).